Consider the following 357-residue polypeptide: ATP-dependent 6-phosphofructokinase (357 aa).

ATP is bound by residues G12, K80 to G81, and G107 to S110. D108 is a binding site for Mg(2+). Substrate is bound by residues T131–D133, R168, M175–R177, E229, R272, and H278–R281. The active-site Proton acceptor is the D133.

It belongs to the phosphofructokinase type A (PFKA) family. Mixed-substrate PFK group III subfamily. In terms of assembly, homodimer or homotetramer. The cofactor is Mg(2+).

Its subcellular location is the cytoplasm. It catalyses the reaction beta-D-fructose 6-phosphate + ATP = beta-D-fructose 1,6-bisphosphate + ADP + H(+). Its pathway is carbohydrate degradation; glycolysis; D-glyceraldehyde 3-phosphate and glycerone phosphate from D-glucose: step 3/4. Its activity is regulated as follows. Subject to allosteric activation by ADP and other diphosphonucleosides, and inhibition by phosphoenolpyruvate. Its function is as follows. Catalyzes the phosphorylation of D-fructose 6-phosphate to fructose 1,6-bisphosphate by ATP, the first committing step of glycolysis. This is ATP-dependent 6-phosphofructokinase from Trichormus variabilis (strain ATCC 29413 / PCC 7937) (Anabaena variabilis).